Consider the following 165-residue polypeptide: uncharacterized protein (165 aa).

The region spanning 28 to 139 (QNALKDTGLA…KPNEREEAVK (112 aa)) is the Cupin type-1 domain.

This is an uncharacterized protein from Bacillus subtilis (strain 168).